The sequence spans 187 residues: Ribosome maturation factor RimM (187 aa).

Positions 111–187 (KDEYYWVDLI…RILVDWQADF (77 aa)) constitute a PRC barrel domain.

It belongs to the RimM family. In terms of assembly, binds ribosomal protein uS19.

The protein resides in the cytoplasm. Its function is as follows. An accessory protein needed during the final step in the assembly of 30S ribosomal subunit, possibly for assembly of the head region. Essential for efficient processing of 16S rRNA. May be needed both before and after RbfA during the maturation of 16S rRNA. It has affinity for free ribosomal 30S subunits but not for 70S ribosomes. The polypeptide is Ribosome maturation factor RimM (Albidiferax ferrireducens (strain ATCC BAA-621 / DSM 15236 / T118) (Rhodoferax ferrireducens)).